The following is a 476-amino-acid chain: Protein transport protein Sec61 subunit alpha-like 2 (476 aa).

At 2–33 (AIKFLEVIKPFCAVLPEIQKPERRIQFKEKVL) the chain is on the cytoplasmic side. Residues 34-53 (WTAITLFIFLVCCQIPLFGI) form a helical membrane-spanning segment. The Lumenal portion of the chain corresponds to 54-76 (MSSDSADPFYWMRVIMASNRGTL). The chain crosses the membrane as a helical span at residues 77–96 (MELGISPIVTSGLIMQLLAG). Topologically, residues 97-117 (AKIIEVGDTPKDRALFNGAQK) are cytoplasmic. Residues 118-138 (LFGMIITIGQAVVYVMTGMYG) traverse the membrane as a helical segment. Residues 139 to 144 (DPSEMG) are Lumenal-facing. Residues 145-165 (AGICLLIIIQLFVAGLIVLLL) traverse the membrane as a helical segment. Residues 166 to 172 (DELLQKG) are Cytoplasmic-facing. The helical transmembrane segment at 173 to 193 (YGLGSGISLFIATNICETIVW) threads the bilayer. At 194–240 (KAFSPTTVNTGRGTEFEGAIIALFHLLATRTDKVRALREAFYRQNLP) the chain is on the lumenal side. A helical membrane pass occupies residues 241–261 (NLMNLIATIFVFAVVIYFQGF). At 262–288 (RVDLPIKSARYRGQYNTYPIKLFYTSN) the chain is on the cytoplasmic side. A helical transmembrane segment spans residues 289-309 (IPIILQSALVSNLYVISQMLS). Residues 310–354 (TRFSGNFLVNLLGTWSDTSTGGPARAYPVGGLCYYLSPPESFGTV) are Lumenal-facing. Residues 355–375 (LEDPIHAIIYIIFMLGSCAFF) form a helical membrane-spanning segment. The Cytoplasmic segment spans residues 376-420 (SKTWIEVSGSSAKDVAKQLKEQQMVMRGHRETSMVHELNRYIPTA). The chain crosses the membrane as a helical span at residues 421-441 (AAFGGLCIGGLSVMADFLGAI). Over 442–445 (GSGT) the chain is Lumenal. A helical transmembrane segment spans residues 446–462 (GILLAVTIIYQYFEIFV). Residues 463–476 (KEQSEVGSVGALLF) lie on the Cytoplasmic side of the membrane.

The protein belongs to the SecY/SEC61-alpha family. In terms of assembly, the SEC61 channel-forming translocon complex consists of channel-forming core components SEC61A1, SEC61B and SEC61G and different auxiliary components such as SEC62 and SEC63.

The protein resides in the endoplasmic reticulum membrane. In terms of biological role, component of SEC61 channel-forming translocon complex that mediates transport of signal peptide-containing precursor polypeptides across the endoplasmic reticulum (ER). Forms a ribosome receptor and a gated pore in the ER membrane, both functions required for cotranslational translocation of nascent polypeptides. The polypeptide is Protein transport protein Sec61 subunit alpha-like 2 (sec61al2) (Danio rerio (Zebrafish)).